We begin with the raw amino-acid sequence, 119 residues long: Large ribosomal subunit protein bL20 (119 aa).

Belongs to the bacterial ribosomal protein bL20 family.

Its function is as follows. Binds directly to 23S ribosomal RNA and is necessary for the in vitro assembly process of the 50S ribosomal subunit. It is not involved in the protein synthesizing functions of that subunit. The protein is Large ribosomal subunit protein bL20 of Xanthomonas oryzae pv. oryzae (strain KACC10331 / KXO85).